The following is a 137-amino-acid chain: Large ribosomal subunit protein uL16 (137 aa).

Belongs to the universal ribosomal protein uL16 family. In terms of assembly, part of the 50S ribosomal subunit.

Binds 23S rRNA and is also seen to make contacts with the A and possibly P site tRNAs. The polypeptide is Large ribosomal subunit protein uL16 (Dinoroseobacter shibae (strain DSM 16493 / NCIMB 14021 / DFL 12)).